The following is a 449-amino-acid chain: Tubulin beta chain (449 aa).

GTP is bound by residues Q11, E69, S138, G142, T143, G144, N204, and N226. E69 contacts Mg(2+). The tract at residues 426 to 449 is disordered; sequence QDATAEEEGEFDEEEGVMDAEGAA. The span at 429–443 shows a compositional bias: acidic residues; that stretch reads TAEEEGEFDEEEGVM.

It belongs to the tubulin family. Dimer of alpha and beta chains. A typical microtubule is a hollow water-filled tube with an outer diameter of 25 nm and an inner diameter of 15 nM. Alpha-beta heterodimers associate head-to-tail to form protofilaments running lengthwise along the microtubule wall with the beta-tubulin subunit facing the microtubule plus end conferring a structural polarity. Microtubules usually have 13 protofilaments but different protofilament numbers can be found in some organisms and specialized cells. Requires Mg(2+) as cofactor.

Its subcellular location is the cytoplasm. It is found in the cytoskeleton. Functionally, tubulin is the major constituent of microtubules, a cylinder consisting of laterally associated linear protofilaments composed of alpha- and beta-tubulin heterodimers. Microtubules grow by the addition of GTP-tubulin dimers to the microtubule end, where a stabilizing cap forms. Below the cap, tubulin dimers are in GDP-bound state, owing to GTPase activity of alpha-tubulin. The sequence is that of Tubulin beta chain from Eimeria tenella (Coccidian parasite).